The sequence spans 548 residues: T-complex protein 1 subunit theta (548 aa).

Ala2 is modified (N-acetylalanine). At Ser23 the chain carries Phosphoserine. Phosphotyrosine is present on Tyr30. Residues Tyr47 and Gly48 each coordinate ADP. Asp99 is a binding site for Mg(2+). ADP-binding residues include Gly100, Thr101, Asn102, and Phe103. The ATP site is built by Gly100, Thr101, and Asn102. At Ser162 the chain carries Phosphoserine. ADP is bound by residues Met169, Ser170, and Lys171. 2 residues coordinate ATP: Ser170 and Lys171. Glycyl lysine isopeptide (Lys-Gly) (interchain with G-Cter in SUMO2) cross-links involve residues Lys224, Lys254, and Lys260. Residues Ser269 and Ser317 each carry the phosphoserine modification. Residues Lys318 and Lys400 each carry the N6-acetyllysine modification. Gly412 contributes to the ADP binding site. ATP is bound at residue Gly412. Lys459 participates in a covalent cross-link: Glycyl lysine isopeptide (Lys-Gly) (interchain with G-Cter in SUMO1). Lys466 carries the post-translational modification N6-acetyllysine. ADP is bound at residue Asp499. Residues Asp499 and Lys504 each contribute to the ATP site. A Phosphotyrosine modification is found at Tyr505. The disordered stretch occupies residues 529–548 (PAGGPKPPSGKKDWDDDQND). Lys534 is covalently cross-linked (Glycyl lysine isopeptide (Lys-Gly) (interchain with G-Cter in SUMO2)). Phosphoserine is present on Ser537. A Glycyl lysine isopeptide (Lys-Gly) (interchain with G-Cter in SUMO2) cross-link involves residue Lys539.

It belongs to the TCP-1 chaperonin family. Component of the chaperonin-containing T-complex (TRiC), a hexadecamer composed of two identical back-to-back stacked rings enclosing a protein folding chamber. Each ring is made up of eight different subunits: TCP1/CCT1, CCT2, CCT3, CCT4, CCT5, CCT6A/CCT6, CCT7, CCT8. Interacts with PACRG. Interacts with DNAAF4. Interacts with synaptic plasticity regulator PANTS.

Its subcellular location is the cytoplasm. The protein localises to the cytoskeleton. It localises to the microtubule organizing center. The protein resides in the centrosome. It is found in the cilium basal body. The enzyme catalyses ATP + H2O = ADP + phosphate + H(+). In terms of biological role, component of the chaperonin-containing T-complex (TRiC), a molecular chaperone complex that assists the folding of actin, tubulin and other proteins upon ATP hydrolysis. The TRiC complex mediates the folding of WRAP53/TCAB1, thereby regulating telomere maintenance. As part of the TRiC complex may play a role in the assembly of BBSome, a complex involved in ciliogenesis regulating transports vesicles to the cilia. This is T-complex protein 1 subunit theta (Cct8) from Mus musculus (Mouse).